Here is a 188-residue protein sequence, read N- to C-terminus: UPF0488 protein C8orf33 homolog (188 aa).

Disordered stretches follow at residues 1–65 (MAAP…AEAQ), 87–112 (QRPT…TPLP), and 144–182 (AHSA…RDEE). Ala-2 is subject to N-acetylalanine. Position 41 is a phosphoserine (Ser-41). Over residues 166–182 (PRPEGRSKGTSDTRDEE) the composition is skewed to basic and acidic residues.

It belongs to the UPF0488 family.

The protein is UPF0488 protein C8orf33 homolog of Bos taurus (Bovine).